The following is a 447-amino-acid chain: Glucose-6-phosphate isomerase (447 aa).

E288 acts as the Proton donor in catalysis. Catalysis depends on residues H309 and K423.

Belongs to the GPI family.

Its subcellular location is the cytoplasm. The catalysed reaction is alpha-D-glucose 6-phosphate = beta-D-fructose 6-phosphate. It participates in carbohydrate biosynthesis; gluconeogenesis. The protein operates within carbohydrate degradation; glycolysis; D-glyceraldehyde 3-phosphate and glycerone phosphate from D-glucose: step 2/4. Catalyzes the reversible isomerization of glucose-6-phosphate to fructose-6-phosphate. The chain is Glucose-6-phosphate isomerase from Lactobacillus gasseri (strain ATCC 33323 / DSM 20243 / BCRC 14619 / CIP 102991 / JCM 1131 / KCTC 3163 / NCIMB 11718 / NCTC 13722 / AM63).